A 193-amino-acid chain; its full sequence is dTTP/UTP pyrophosphatase (193 aa).

The active-site Proton acceptor is aspartate 68.

Belongs to the Maf family. YhdE subfamily. The cofactor is a divalent metal cation.

It localises to the cytoplasm. The enzyme catalyses dTTP + H2O = dTMP + diphosphate + H(+). It catalyses the reaction UTP + H2O = UMP + diphosphate + H(+). Its function is as follows. Nucleoside triphosphate pyrophosphatase that hydrolyzes dTTP and UTP. May have a dual role in cell division arrest and in preventing the incorporation of modified nucleotides into cellular nucleic acids. The sequence is that of dTTP/UTP pyrophosphatase from Ruegeria sp. (strain TM1040) (Silicibacter sp.).